The chain runs to 330 residues: Diacylglycerol acyltransferase/mycolyltransferase Ag85A (330 aa).

Positions 1–42 (MKFVDRFRGAVAGMLRRLVVEAMGVALLSALIGVVGSAPAEA) are cleaved as a signal peptide. 84-85 (LR) lines the substrate pocket. A fibronectin-binding region spans residues 100–110 (FEWYYQSGISV). Cysteine 129 and cysteine 134 are disulfide-bonded. The substrate site is built by serine 168 and aspartate 196. Residue serine 168 is the Nucleophile of the active site. Glutamate 272 is a catalytic residue. Substrate is bound by residues 274–277 (LVRT), lysine 281, and 304–306 (HSW). The active site involves histidine 304.

Belongs to the mycobacterial A85 antigen family. Homodimer.

It localises to the secreted. The protein resides in the cell wall. Its subcellular location is the cytoplasm. The catalysed reaction is an acyl-CoA + a 1,2-diacyl-sn-glycerol = a triacyl-sn-glycerol + CoA. It carries out the reaction 2 alpha,alpha'-trehalose 6-mycolate = alpha,alpha'-trehalose 6,6'-bismycolate + alpha,alpha-trehalose. Its function is as follows. The antigen 85 proteins (FbpA, FbpB, FbpC) are responsible for the high affinity of mycobacteria for fibronectin, a large adhesive glycoprotein, which facilitates the attachment of M.tuberculosis to murine alveolar macrophages (AMs). They also help to maintain the integrity of the cell wall by catalyzing the transfer of mycolic acids to cell wall arabinogalactan, and through the synthesis of alpha,alpha-trehalose dimycolate (TDM, cord factor). They catalyze the transfer of a mycoloyl residue from one molecule of alpha,alpha-trehalose monomycolate (TMM) to another TMM, leading to the formation of TDM. FbpA mediates triacylglycerol (TAG) formation with long-chain acyl-CoA as the acyl donor and 1,2-dipalmitoyl-sn-glycerol (1,2-dipalmitin) as the acyl acceptor. It has a preference for C26:0-CoA over C18:1-CoA. The chain is Diacylglycerol acyltransferase/mycolyltransferase Ag85A (fbpA) from Mycobacterium leprae (strain TN).